Consider the following 107-residue polypeptide: Phosphoribosyl-ATP pyrophosphatase (107 aa).

This sequence belongs to the PRA-PH family.

Its subcellular location is the cytoplasm. The catalysed reaction is 1-(5-phospho-beta-D-ribosyl)-ATP + H2O = 1-(5-phospho-beta-D-ribosyl)-5'-AMP + diphosphate + H(+). It functions in the pathway amino-acid biosynthesis; L-histidine biosynthesis; L-histidine from 5-phospho-alpha-D-ribose 1-diphosphate: step 2/9. The polypeptide is Phosphoribosyl-ATP pyrophosphatase (hisE) (Caulobacter vibrioides (strain ATCC 19089 / CIP 103742 / CB 15) (Caulobacter crescentus)).